The sequence spans 291 residues: MSRHLETSLNNKEFVLNSLEKGLRLDGRQLSDFRSLEIQFGKEYGQVDVSFGHTRVMARITTEITKPYTDRPFDGIFSITTELTPLAYSAFEAGRVSDQEIVISRLIEKAVRRSNALDTESLCIISGQKCWHVRASVHFINHDGNLVDAACIAVIAALCHFRRPELTVVGEEVTVHPVEERVPVPLSILHMPICVTFSFFNNGELAIVDATLEEEDLCNGSMTITLNKNREVCQIYKAGGIIIDPSKIISCAKTAFDIAVSVCSVIQQALDEDLRKKETQYLGGSAENERS.

It belongs to the RNase PH family. Component of the RNA exosome complex. Specifically part of the catalytically inactive RNA exosome core complex (Exo-9) which may associate with the catalytic subunits rrp6 and dis3 in cytoplasmic- and nuclear-specific RNA exosome complex forms. Exo-9 is formed by a hexameric base ring of RNase PH domain-containing subunits and a cap ring consisting of csl4, rrp4 and rrp40.

It localises to the cytoplasm. Its subcellular location is the nucleus. It is found in the nucleolus. In terms of biological role, non-catalytic component of the RNA exosome complex which has 3'-&gt;5' exoribonuclease activity and participates in a multitude of cellular RNA processing and degradation events. In the nucleus, the RNA exosome complex is involved in proper maturation of stable RNA species such as rRNA, snRNA and snoRNA, in the elimination of RNA processing by-products and non-coding 'pervasive' transcripts, such as antisense RNA species and cryptic unstable transcripts (CUTs), and of mRNAs with processing defects, thereby limiting or excluding their export to the cytoplasm. In the cytoplasm, the RNA exosome complex is involved in general mRNA turnover and in RNA surveillance pathways, preventing translation of aberrant mRNAs. The catalytic inactive RNA exosome core complex of 9 subunits (Exo-9) is proposed to play a pivotal role in the binding and presentation of RNA for ribonucleolysis, and to serve as a scaffold for the association with catalytic subunits and accessory proteins or complexes. ski6 is part of the hexameric ring of RNase PH domain-containing subunits proposed to form a central channel which threads RNA substrates for degradation. The sequence is that of Exosome complex component rrp45 (rrp45) from Schizosaccharomyces pombe (strain 972 / ATCC 24843) (Fission yeast).